Reading from the N-terminus, the 463-residue chain is MSTGTVVQVIGAVVDVEFPQDAVPQVYDALKITGEGSCNGLVLEVQQQLGGGVVRTIAMGTSDGLRRGLEVVNSGSPISVPVGTATLGRIMNVLGEPIDEAGAIGEEERYVIHRSAPSYEDQSNTTELLETGIKVIDLVCPFAKGGKVGLFGGAGVGKTVNMMELINNIAKAHSGLSVFAGVGERTREGNDFYYEMKDSGVLDKVAMVYGQMNEPPGNRLRVALTGLTMAEKFRDEGRDVLLFVDNIYRYTLAGTEVSALLGRMPSAVGYQPTLAEEMGVLQERITSTKTGSITSVQAVYVPADDLTDPSPATTFAHLDATVVLSRQIASLGIYPAVDPLDSTSRQLDPLVVGQEHYDVANGVQTVLQRYKELKDIIAILGMDELSDDDKMTVSRARKIERFLSQPFHVAEVFTGSPGKYVSLKDTIRGFKGILSGEFDHIPEQAFYMVGSIDEAVEKANKKK.

Glycine 152–threonine 159 contributes to the ATP binding site.

It belongs to the ATPase alpha/beta chains family. F-type ATPases have 2 components, CF(1) - the catalytic core - and CF(0) - the membrane proton channel. CF(1) has five subunits: alpha(3), beta(3), gamma(1), delta(1), epsilon(1). CF(0) has three main subunits: a(1), b(2) and c(9-12). The alpha and beta chains form an alternating ring which encloses part of the gamma chain. CF(1) is attached to CF(0) by a central stalk formed by the gamma and epsilon chains, while a peripheral stalk is formed by the delta and b chains.

Its subcellular location is the cell inner membrane. It carries out the reaction ATP + H2O + 4 H(+)(in) = ADP + phosphate + 5 H(+)(out). Its function is as follows. Produces ATP from ADP in the presence of a proton gradient across the membrane. The catalytic sites are hosted primarily by the beta subunits. In Shewanella sp. (strain MR-7), this protein is ATP synthase subunit beta.